A 134-amino-acid polypeptide reads, in one-letter code: Cytochrome b5 (134 aa).

The Cytochrome b5 heme-binding domain occupies 6-82 (TKTFTRAEVA…MKKYKIGELV (77 aa)). Heme-binding residues include His41 and His65. A disordered region spans residues 86-105 (RTSVAQKSEPTWSTEQQTEE). Over residues 87-105 (TSVAQKSEPTWSTEQQTEE) the composition is skewed to polar residues. A helical membrane pass occupies residues 111 to 131 (WLVPLVLCLVATLFYKFFFGG).

It belongs to the cytochrome b5 family.

The protein resides in the endoplasmic reticulum membrane. It is found in the microsome membrane. Cytochrome b5 is a membrane-bound hemoprotein which functions as an electron carrier for several membrane-bound oxygenases. This chain is Cytochrome b5 (Cyt-b5), found in Drosophila melanogaster (Fruit fly).